Reading from the N-terminus, the 1742-residue chain is Meiosis regulator and mRNA stability factor 1 (1742 aa).

S65 carries the phosphoserine modification. The NYN domain occupies 351 to 488; sequence IGVFWDIENC…ALLHHANELI (138 aa). Disordered stretches follow at residues 620–642 and 655–721; these read PSSA…TRNA and SKTG…KEKE. The span at 631–642 shows a compositional bias: polar residues; sequence SQANSGSATRNA. Residues 673-689 show a composition bias toward low complexity; sequence APPHRSSSAAAPAPKAP. Y696 is subject to Phosphotyrosine. Phosphoserine is present on S757. Positions 788–867 constitute an RRM domain; that stretch reads VDVQISNLDY…KKILVSLATG (80 aa). HTH OST-type domains follow at residues 872–946 and 1000–1077; these read SLSL…SPLG and SLKT…HNKP. A phosphoserine mark is found at S1089 and S1091. HTH OST-type domains follow at residues 1097 to 1171, 1173 to 1247, 1257 to 1332, 1333 to 1408, 1409 to 1484, and 1486 to 1560; these read QLIQ…LTHR, QVKR…CIPR, RTKQ…TEVE, RFKA…INRK, SLRA…CVKL, and SLYL…LKND. At S1571 the chain carries Phosphoserine. A disordered region spans residues 1678–1729; the sequence is IRNENLPPDPSSPGVSAAVPAPPSPSSETPESLLSKDPTESPAKKQPKNRVK. Residues 1703–1712 are compositionally biased toward low complexity; that stretch reads SSETPESLLS.

As to quaternary structure, interacts with LIMK2.

It is found in the peroxisome. Essential regulator of oogenesis required for female meiotic progression to repress transposable elements and preventing their mobilization, which is essential for the germline integrity. Probably acts via some RNA metabolic process, equivalent to the piRNA system in males, which mediates the repression of transposable elements during meiosis by forming complexes composed of RNAs and governs the methylation and subsequent repression of transposons. Also required to protect from DNA double-strand breaks. The chain is Meiosis regulator and mRNA stability factor 1 from Bos taurus (Bovine).